A 201-amino-acid polypeptide reads, in one-letter code: Recombination protein RecR (201 aa).

The C4-type zinc finger occupies 57 to 72 (CKYCRTFTEQEQCTIC). A Toprim domain is found at 81 to 176 (GQICVVESPA…TASRIAHGVP (96 aa)).

The protein belongs to the RecR family.

Functionally, may play a role in DNA repair. It seems to be involved in an RecBC-independent recombinational process of DNA repair. It may act with RecF and RecO. This chain is Recombination protein RecR, found in Photorhabdus laumondii subsp. laumondii (strain DSM 15139 / CIP 105565 / TT01) (Photorhabdus luminescens subsp. laumondii).